The chain runs to 34 residues: Photosystem II reaction center protein M (34 aa).

Residues 5-25 (ILAFIATALFILIPTSFLLII) form a helical membrane-spanning segment.

The protein belongs to the PsbM family. In terms of assembly, PSII is composed of 1 copy each of membrane proteins PsbA, PsbB, PsbC, PsbD, PsbE, PsbF, PsbH, PsbI, PsbJ, PsbK, PsbL, PsbM, PsbT, PsbX, PsbY, PsbZ, Psb30/Ycf12, at least 3 peripheral proteins of the oxygen-evolving complex and a large number of cofactors. It forms dimeric complexes. Detected in both etioplasts and green leaves; PSII is only assembled in green leaves.

The protein resides in the plastid. The protein localises to the chloroplast thylakoid membrane. Functionally, one of the components of the core complex of photosystem II (PSII). PSII is a light-driven water:plastoquinone oxidoreductase that uses light energy to abstract electrons from H(2)O, generating O(2) and a proton gradient subsequently used for ATP formation. It consists of a core antenna complex that captures photons, and an electron transfer chain that converts photonic excitation into a charge separation. This subunit is found at the monomer-monomer interface. In Hordeum vulgare (Barley), this protein is Photosystem II reaction center protein M.